A 183-amino-acid polypeptide reads, in one-letter code: Crossover junction endodeoxyribonuclease RuvC (183 aa).

Residues D7, E66, and D138 contribute to the active site. Mg(2+) contacts are provided by D7, E66, and D138.

Belongs to the RuvC family. In terms of assembly, homodimer which binds Holliday junction (HJ) DNA. The HJ becomes 2-fold symmetrical on binding to RuvC with unstacked arms; it has a different conformation from HJ DNA in complex with RuvA. In the full resolvosome a probable DNA-RuvA(4)-RuvB(12)-RuvC(2) complex forms which resolves the HJ. The cofactor is Mg(2+).

The protein localises to the cytoplasm. The enzyme catalyses Endonucleolytic cleavage at a junction such as a reciprocal single-stranded crossover between two homologous DNA duplexes (Holliday junction).. The RuvA-RuvB-RuvC complex processes Holliday junction (HJ) DNA during genetic recombination and DNA repair. Endonuclease that resolves HJ intermediates. Cleaves cruciform DNA by making single-stranded nicks across the HJ at symmetrical positions within the homologous arms, yielding a 5'-phosphate and a 3'-hydroxyl group; requires a central core of homology in the junction. The consensus cleavage sequence is 5'-(A/T)TT(C/G)-3'. Cleavage occurs on the 3'-side of the TT dinucleotide at the point of strand exchange. HJ branch migration catalyzed by RuvA-RuvB allows RuvC to scan DNA until it finds its consensus sequence, where it cleaves and resolves the cruciform DNA. The polypeptide is Crossover junction endodeoxyribonuclease RuvC (Burkholderia ambifaria (strain MC40-6)).